A 715-amino-acid polypeptide reads, in one-letter code: Polyribonucleotide nucleotidyltransferase (715 aa).

2 residues coordinate Mg(2+): D498 and D504. Residues 565 to 625 (PKVCMMQIKP…ETVKKTVAFI (61 aa)) form the KH domain. An S1 motif domain is found at 635-706 (GTCYQASILR…DRGRIDFLLL (72 aa)).

The protein belongs to the polyribonucleotide nucleotidyltransferase family. Requires Mg(2+) as cofactor.

It is found in the cytoplasm. It catalyses the reaction RNA(n+1) + phosphate = RNA(n) + a ribonucleoside 5'-diphosphate. Involved in mRNA degradation. Catalyzes the phosphorolysis of single-stranded polyribonucleotides processively in the 3'- to 5'-direction. The protein is Polyribonucleotide nucleotidyltransferase of Onion yellows phytoplasma (strain OY-M).